Here is a 96-residue protein sequence, read N- to C-terminus: Aspartyl/glutamyl-tRNA(Asn/Gln) amidotransferase subunit C (96 aa).

The protein belongs to the GatC family. In terms of assembly, heterotrimer of A, B and C subunits.

The catalysed reaction is L-glutamyl-tRNA(Gln) + L-glutamine + ATP + H2O = L-glutaminyl-tRNA(Gln) + L-glutamate + ADP + phosphate + H(+). The enzyme catalyses L-aspartyl-tRNA(Asn) + L-glutamine + ATP + H2O = L-asparaginyl-tRNA(Asn) + L-glutamate + ADP + phosphate + 2 H(+). Functionally, allows the formation of correctly charged Asn-tRNA(Asn) or Gln-tRNA(Gln) through the transamidation of misacylated Asp-tRNA(Asn) or Glu-tRNA(Gln) in organisms which lack either or both of asparaginyl-tRNA or glutaminyl-tRNA synthetases. The reaction takes place in the presence of glutamine and ATP through an activated phospho-Asp-tRNA(Asn) or phospho-Glu-tRNA(Gln). The protein is Aspartyl/glutamyl-tRNA(Asn/Gln) amidotransferase subunit C of Aliarcobacter butzleri (strain RM4018) (Arcobacter butzleri).